Here is a 340-residue protein sequence, read N- to C-terminus: Fructoselysine 6-phosphate deglycase (340 aa).

SIS domains lie at isoleucine 35–proline 169 and leucine 201–arginine 331.

Homododecamer.

The enzyme catalyses N(6)-(6-phospho-D-fructosyl)-L-lysine + H2O = D-glucose 6-phosphate + L-lysine. It functions in the pathway carbohydrate metabolism; fructoselysine degradation; D-glucose 6-phosphate and lysine from fructoselysine: step 2/2. Strongly inhibited by ZnCl(2). Its function is as follows. Catalyzes the reversible conversion of fructoselysine 6-phosphate to glucose 6-phosphate and lysine. Functions in a fructoselysine degradation pathway that allows E.coli to grow on fructoselysine or psicoselysine. The polypeptide is Fructoselysine 6-phosphate deglycase (Escherichia coli (strain K12)).